Here is a 243-residue protein sequence, read N- to C-terminus: Tubulin-folding cofactor B (243 aa).

In terms of domain architecture, CAP-Gly spans arginine 181–arginine 223.

It belongs to the TBCB family. Supercomplex made of cofactors A to E. Cofactors A and D function by capturing and stabilizing tubulin in a quasi-native conformation. Cofactor E binds to the cofactor D-tubulin complex; interaction with cofactor C then causes the release of tubulin polypeptides that are committed to the native state. Interacts with TUBA6. In terms of tissue distribution, expressed in roots, stems, leaves, flowers and siliques.

The protein localises to the cytoplasm. Its function is as follows. Involved in control of cell division. Regulates probably the availability of alpha-tubulin for dimerization of alpha-/beta-tubulin, which is required for proper microtubule biogenesis. Decreased expression of TFCB results in enlarged mesophyll cells and leaf epidermal cells with bulged nuclei, increased ploidy and increased numbers of spindles and phragmoplasts. The protein is Tubulin-folding cofactor B (TFCB) of Arabidopsis thaliana (Mouse-ear cress).